A 431-amino-acid chain; its full sequence is D-tagatose-1,6-bisphosphate aldolase subunit KbaZ (431 aa).

The protein belongs to the GatZ/KbaZ family. KbaZ subfamily. In terms of assembly, forms a complex with KbaY.

The protein operates within carbohydrate metabolism; D-tagatose 6-phosphate degradation; D-glyceraldehyde 3-phosphate and glycerone phosphate from D-tagatose 6-phosphate: step 2/2. Component of the tagatose-1,6-bisphosphate aldolase KbaYZ that is required for full activity and stability of the Y subunit. Could have a chaperone-like function for the proper and stable folding of KbaY. When expressed alone, KbaZ does not show any aldolase activity. The protein is D-tagatose-1,6-bisphosphate aldolase subunit KbaZ of Salmonella arizonae (strain ATCC BAA-731 / CDC346-86 / RSK2980).